Here is a 336-residue protein sequence, read N- to C-terminus: tRNA(Ile)-lysidine synthase (336 aa).

40-45 contacts ATP; sequence SGGQDS.

The protein belongs to the tRNA(Ile)-lysidine synthase family.

The protein localises to the cytoplasm. It carries out the reaction cytidine(34) in tRNA(Ile2) + L-lysine + ATP = lysidine(34) in tRNA(Ile2) + AMP + diphosphate + H(+). Its function is as follows. Ligates lysine onto the cytidine present at position 34 of the AUA codon-specific tRNA(Ile) that contains the anticodon CAU, in an ATP-dependent manner. Cytidine is converted to lysidine, thus changing the amino acid specificity of the tRNA from methionine to isoleucine. The chain is tRNA(Ile)-lysidine synthase from Prochlorococcus marinus (strain SARG / CCMP1375 / SS120).